We begin with the raw amino-acid sequence, 166 residues long: Protein-export protein SecB (166 aa).

It belongs to the SecB family. As to quaternary structure, homotetramer, a dimer of dimers. One homotetramer interacts with 1 SecA dimer.

Its subcellular location is the cytoplasm. In terms of biological role, one of the proteins required for the normal export of preproteins out of the cell cytoplasm. It is a molecular chaperone that binds to a subset of precursor proteins, maintaining them in a translocation-competent state. It also specifically binds to its receptor SecA. The chain is Protein-export protein SecB from Actinobacillus pleuropneumoniae serotype 7 (strain AP76).